The primary structure comprises 715 residues: ATP-dependent DNA helicase Hel308 (715 aa).

A Q motif motif is present at residues 1-29 (MKVEELRIDERIKEVLKKRGISELYPPQA). Residues Gln-28 and 46–53 (IPTASGKT) contribute to the ATP site. Positions 33-197 (TSGILKGENA…WLNAKLIKSD (165 aa)) constitute a Helicase ATP-binding domain. Positions 145 to 148 (DEIH) match the DEAH box motif. The Helicase C-terminal domain occupies 229 to 422 (LVYDAIKRSK…ILRGQILALI (194 aa)).

This sequence belongs to the helicase family. Hel308 subfamily. In terms of assembly, monomer.

It catalyses the reaction Couples ATP hydrolysis with the unwinding of duplex DNA by translocating in the 3'-5' direction.. It carries out the reaction ATP + H2O = ADP + phosphate + H(+). Functionally, DNA-dependent ATPase and 3'-5' DNA helicase that may be involved in repair of stalled replication forks. This chain is ATP-dependent DNA helicase Hel308, found in Pyrococcus horikoshii (strain ATCC 700860 / DSM 12428 / JCM 9974 / NBRC 100139 / OT-3).